Consider the following 630-residue polypeptide: GATA-type transcription factor SRE1 (630 aa).

2 disordered regions span residues 1-139 (MTGL…TPLW) and 162-203 (DRPT…RLTD). Composition is skewed to polar residues over residues 66-82 (DNTQ…QLQN), 115-133 (KAQS…NCGT), and 175-196 (YGSS…TNDG). Residues 128 to 152 (CSNCGTKRTPLWRRSPTGATICNAC) form a GATA-type 1 zinc finger. Residues 219–237 (CPGGGSCNGTGGAEGCDGC) are cystein-rich region (CRR). The disordered stretch occupies residues 256 to 283 (HTPRTSPQVSTQGGPGSTEGDAGSSNPE). Polar residues predominate over residues 258 to 267 (PRTSPQVSTQ). Residues 291–315 (CQNCQTTVTPLWRRDENGHPICNAC) form a GATA-type 2 zinc finger. The tract at residues 339 to 609 (KRVVPAMREQ…AKAERRARLQ (271 aa)) is disordered. The segment covering 349–363 (SPPSATQSSNGSVSP) has biased composition (polar residues). Composition is skewed to low complexity over residues 436–447 (NNHNNGETTNTH) and 492–503 (SSSSASFPNNNP). A compositionally biased stretch (polar residues) spans 504–513 (GRFNSISSLL). Low complexity predominate over residues 558–568 (SHSPPRFSPSL). Basic and acidic residues predominate over residues 595 to 609 (VDHRDAKAERRARLQ). Positions 595 to 630 (VDHRDAKAERRARLQREAQDMREALKAKERELALLE) form a coiled coil.

Its subcellular location is the nucleus. In terms of biological role, GATA-type transcription repressor that regulates iron- acquisition genes through specific binding the GATA sequence element 5'-(G/A)ATC(T/A)GATAA-3' of target promoters in an iron- and zinc-dependent manner. Regulation occurs via direct binding of iron ions. Iron acquisition regulation is critical for survival under both iron-limiting conditions (to acquire essential iron) and iron-replete conditions (to limit iron toxicity). SRE1 targets include genes encoding a number of key iron-regulated factors such as those involved in siderophore biosynthesis, presumed ferric reductase activity, iron-responsive transcriptional regulation, oxidative stress response, as well as genes encoding a number of putative oxidoreductases, metabolic and mitochondrial enzymes, superoxide dismutase, and genes previously identified as induced during nitrosative stress. This chain is GATA-type transcription factor SRE1, found in Ajellomyces capsulatus (Darling's disease fungus).